The chain runs to 214 residues: Non-structural protein NP-1 (214 aa).

2 disordered regions span residues Met-1–Tyr-87 and Glu-192–Asn-214. Basic residues predominate over residues Ser-33 to Gly-43. Over residues Glu-44–Gln-55 the composition is skewed to basic and acidic residues. Polar residues predominate over residues Glu-56 to Ala-71. Residues Glu-192–Met-201 are compositionally biased toward acidic residues.

Belongs to the Bocaparvovirus Non-structural protein NP-1 family.

The protein resides in the host nucleus. In terms of biological role, required for the expression of the capsid proteins. Performs the splicing and internal polyadenylation of the viral capsid-encoding mRNA precursor, which allows its maturation and expression. Transactivates the viral promoter. The sequence is that of Non-structural protein NP-1 (NP1) from Human bocavirus 2 (HBoV2).